A 788-amino-acid polypeptide reads, in one-letter code: ATP-dependent 6-phosphofructokinase, platelet type (788 aa).

Met1 is subject to N-acetylmethionine. Residues 1-399 (MSDQDSSTSS…NLNTYKRLAI (399 aa)) form an N-terminal catalytic PFK domain 1 region. Phosphoserine occurs at positions 2, 6, 12, and 21. Residues Gly34, 97-98 (RC), and 127-130 (GDGS) each bind ATP. Position 128 (Asp128) interacts with Mg(2+). Ser142 carries the post-translational modification Phosphoserine. Substrate is bound by residues 173–175 (SID), Arg210, 217–219 (MGR), Glu273, Arg301, and 307–310 (HVQR). The Proton acceptor role is filled by Asp175. Ser386 is modified (phosphoserine). Lys395 carries the N6-acetyllysine modification. An interdomain linker region spans residues 400–411 (KEPDDKIPKSNC). Residues 412–788 (NVAIINVGAP…VHNHGELSAI (377 aa)) form a C-terminal regulatory PFK domain 2 region. Residue Arg481 coordinates beta-D-fructose 2,6-bisphosphate. Lys486 carries the N6-acetyllysine modification. Beta-D-fructose 2,6-bisphosphate-binding positions include 538–542 (TVSNN), Arg576, 583–585 (MGG), and Glu639. An O-linked (GlcNAc) serine glycan is attached at Ser540. The residue at position 651 (Tyr651) is a Phosphotyrosine. Beta-D-fructose 2,6-bisphosphate-binding positions include Arg665 and 671–674 (HMQQ). The residue at position 688 (Lys688) is an N6-acetyllysine. Arg744 provides a ligand contact to beta-D-fructose 2,6-bisphosphate.

Belongs to the phosphofructokinase type A (PFKA) family. ATP-dependent PFK group I subfamily. Eukaryotic two domain clade 'E' sub-subfamily. As to quaternary structure, homo- and heterotetramers. Phosphofructokinase (PFK) enzyme functions as a tetramer composed of different combinations of 3 types of subunits, called PFKM (M), PFKL (L) and PFKP (P). The composition of the PFK tetramer differs according to the tissue type it is present in. The kinetic and regulatory properties of the tetrameric enzyme are dependent on the subunit composition, hence can vary across tissues. Interacts with ATG4B; promoting phosphorylation of ATG4B. The cofactor is Mg(2+). Post-translationally, glcNAcylation decreases enzyme activity. In terms of processing, phosphorylation at Ser-386 promotes interaction with ATG4B. Expressed at high level in neuroendocrine tissues.

Its subcellular location is the cytoplasm. The enzyme catalyses beta-D-fructose 6-phosphate + ATP = beta-D-fructose 1,6-bisphosphate + ADP + H(+). It participates in carbohydrate degradation; glycolysis; D-glyceraldehyde 3-phosphate and glycerone phosphate from D-glucose: step 3/4. Its activity is regulated as follows. Allosterically activated by ADP, AMP, or fructose 2,6-bisphosphate, and allosterically inhibited by ATP or citrate. Its function is as follows. Catalyzes the phosphorylation of D-fructose 6-phosphate to fructose 1,6-bisphosphate by ATP, the first committing step of glycolysis. The polypeptide is ATP-dependent 6-phosphofructokinase, platelet type (Pfkp) (Rattus norvegicus (Rat)).